A 44-amino-acid chain; its full sequence is Alpha-amylase inhibitor magnificamide (44 aa).

Cystine bridges form between cysteine 6–cysteine 38, cysteine 16–cysteine 33, and cysteine 20–cysteine 39. Positions tyrosine 7–histidine 10 are inhibitory motif.

It belongs to the sea anemone alpha-amylase inhibitor family.

Its subcellular location is the secreted. Mammalian alpha-amylase (AMY2A) inhibitor. The recombinant peptide inhibits porcine pancreatic (Ki=0.17 nM) and human saliva alpha-amylases (Ki=7.7 nM). It does not show antimicrobial (tested on fungi and bacteria) or channel modulating activities (tested on 18 voltage-gated sodium and potassium channles). The chain is Alpha-amylase inhibitor magnificamide from Heteractis magnifica (Magnificent sea anemone).